The primary structure comprises 249 residues: Probable transcriptional regulatory protein A1S_1496 (249 aa).

This sequence belongs to the TACO1 family.

Its subcellular location is the cytoplasm. This is Probable transcriptional regulatory protein A1S_1496 from Acinetobacter baumannii (strain ATCC 17978 / DSM 105126 / CIP 53.77 / LMG 1025 / NCDC KC755 / 5377).